We begin with the raw amino-acid sequence, 1114 residues long: Constitutive coactivator of PPAR-gamma-like protein 1 (1114 aa).

Residues 339 to 402 (PPHYLARPNP…YNLAEPALTL (64 aa)) are interaction with YES1, SRC and FYN. Disordered stretches follow at residues 372–396 (QAKP…YNLA) and 411–519 (EQNY…GNQI). Polar residues predominate over residues 431 to 443 (SPINPAPSGSPNH). Basic and acidic residues predominate over residues 477 to 498 (GWEKTGSHSEPQARGDPGDQTK). Residues 499–510 (AEGSSTASSGSQ) show a composition bias toward polar residues. Position 651 is a phosphothreonine (T651). The segment at 825-1114 (AEQAAKVEKM…LEAAVLKKEE (290 aa)) is RNA binding. R869, R880, and R882 each carry omega-N-methylarginine. The segment at 918–940 (FSGSDSSRTSKSQGGIQPIPSQG) is disordered. An N6-acetyllysine modification is found at K928. Positions 929-940 (SQGGIQPIPSQG) are enriched in low complexity. S956 carries the phosphoserine modification. 2 positions are modified to omega-N-methylarginine: R978 and R982. The disordered stretch occupies residues 1009 to 1099 (AIQGKPPYAA…LNALSTDSGC (91 aa)). Position 1019 is a phosphoserine (S1019). Positions 1022 to 1033 (EVAKELKSRSGE) are enriched in basic and acidic residues. Over residues 1034–1043 (SKSSAMSSDG) the composition is skewed to polar residues. 3 positions are modified to phosphoserine: S1040, S1041, and S1044. Positions 1060-1097 (MNGSAGDTRAPSHSESALNNDSKTCNTNPHLNALSTDS) are enriched in polar residues.

This sequence belongs to the constitutive coactivator of PPAR-gamma family. In terms of assembly, interacts with PURA. Interacts with YES1, SRC, FYN. Upon tyrosine phosphorylation, interacts with PIK3R1. Arg-978 is dimethylated, probably to asymmetric dimethylarginine. In terms of processing, phosphorylated on tyrosine by src family kinases upon ultraviolet exposure.

Its subcellular location is the cytoplasm. It is found in the cell membrane. Its function is as follows. Component of the oxidative stress-induced survival signaling. May regulate the activation of SRC family protein kinases. May act as a scaffolding protein enabling SRC family protein kinases to phosphorylate and activate PI3-kinase. Binds IGF2 RNA and promotes the production of IGF2 protein. This is Constitutive coactivator of PPAR-gamma-like protein 1 (FAM120A) from Bos taurus (Bovine).